The chain runs to 610 residues: Probable galacturonosyltransferase 5 (610 aa).

Over 1–6 (MNQVRR) the chain is Cytoplasmic. The helical; Signal-anchor for type II membrane protein transmembrane segment at 7–27 (WQRILILSLLLLSVLAPIVFV) threads the bilayer. The Lumenal segment spans residues 28–610 (SNRLKSITSV…PHLQRCNIHD (583 aa)). Residues 86–101 (LSNSSDKSNDTVQSNE) are compositionally biased toward polar residues. Residues 86-170 (LSNSSDKSND…KNTRVQLERA (85 aa)) form a disordered region. 2 N-linked (GlcNAc...) asparagine glycosylation sites follow: Asn-88 and Asn-94. Residues 110–123 (EVDKGNNHKPKEEQ) show a composition bias toward basic and acidic residues. Over residues 124 to 135 (AVSQKTTVSSNA) the composition is skewed to polar residues. Positions 139–170 (ISARDIQLNHKTEFRPPSSKSEKNTRVQLERA) are enriched in basic and acidic residues. Residues Asn-196, Asn-338, Asn-401, and Asn-475 are each glycosylated (N-linked (GlcNAc...) asparagine).

It belongs to the glycosyltransferase 8 family. Expressed in roots, inflorescences, siliques, leaves and stems.

The protein localises to the golgi apparatus membrane. It participates in glycan metabolism; pectin biosynthesis. May be involved in pectin and/or xylans biosynthesis in cell walls. The sequence is that of Probable galacturonosyltransferase 5 (GAUT5) from Arabidopsis thaliana (Mouse-ear cress).